The primary structure comprises 649 residues: Exoribonuclease 2 (649 aa).

An RNB domain is found at 190-517; it reads RKDLTDLDFI…NHRLLKSIIK (328 aa). Residues 562–644 form the S1 motif domain; the sequence is NQKFNAEITD…KTRSIIAKPV (83 aa).

This sequence belongs to the RNR ribonuclease family. RNase II subfamily.

The protein localises to the cytoplasm. The enzyme catalyses Exonucleolytic cleavage in the 3'- to 5'-direction to yield nucleoside 5'-phosphates.. Its function is as follows. Involved in mRNA degradation. Hydrolyzes single-stranded polyribonucleotides processively in the 3' to 5' direction. This chain is Exoribonuclease 2, found in Buchnera aphidicola subsp. Acyrthosiphon pisum (strain 5A).